A 568-amino-acid polypeptide reads, in one-letter code: MTDNSQSLSLIKCPTGIQGFDEITNGGLPQGRPTLICGSAGCGKTLFGVEFLVRGAVEYGEPGVLVSFEESAKEIIQNVASLGWNLQDLVAEEKILIDHIYVEASEIQETGEYDLEALFIRLGYAINKIGAKRILLDTIEVLFSGLENTNIVRAELRRLFHWLKQKGVTAVITGERGDKNLTRQGLEEYVSDCVIKLDQKTVEEVATRTIQVVKYRGSRHSNNEYPFLIEENGISVLPITSLILNHSVSQERISTGIPQLDDMFGGQGYYRGSSILVTGRAGTGKTTLAAFFAQATCLRGERCLYLATEESPQQICRNLNSIGLDLSPYLDSQLLQFDATRPTNYNLEMRLFKIHSWVRNFKPSLVVVDPMSNLITSGNLNQTKNFFMRLIDYLKSQKITVFLTDLTGGNVGYDNEQTEVGVSSLMDTWLELQTLRINGERNRILYILKSRGMAHSNQVREFILSNDGVDLIEAYIGEGQVLTGTQRINQILEEEAIAKRRQQALELSKRNFERKKYLLQAKIDALQMKLASQDEELEVLMLEEKEFKQTMLANRNLIKKSRHIYQNP.

KaiC domains follow at residues 11-250 (IKCP…SVSQ) and 251-485 (ERIS…LTGT). Phosphoserine; by autocatalysis occurs at positions 423 and 424.

Belongs to the KaiC family. Multimerizes, probably forming homohexamers, no interaction with KaiC1 or KaiC3 is seen.

The enzyme catalyses L-seryl-[protein] + ATP = O-phospho-L-seryl-[protein] + ADP + H(+). It catalyses the reaction L-threonyl-[protein] + ATP = O-phospho-L-threonyl-[protein] + ADP + H(+). The catalysed reaction is ATP + H2O = ADP + phosphate + H(+). Functionally, autophosphorylates independently of KaiA. The chain is Circadian clock protein KaiC2 from Synechocystis sp. (strain ATCC 27184 / PCC 6803 / Kazusa).